A 504-amino-acid polypeptide reads, in one-letter code: Maturase K (504 aa).

This sequence belongs to the intron maturase 2 family. MatK subfamily.

The protein localises to the plastid. Its subcellular location is the chloroplast. In terms of biological role, usually encoded in the trnK tRNA gene intron. Probably assists in splicing its own and other chloroplast group II introns. The chain is Maturase K from Pseudoturritis turrita (Tower rock-cress).